Consider the following 308-residue polypeptide: Putative proline iminopeptidase (308 aa).

One can recognise an AB hydrolase-1 domain in the interval Lys30–Ser290. Residue Ser105 is the Nucleophile of the active site. The active site involves Asp261. His289 acts as the Proton donor in catalysis.

This sequence belongs to the peptidase S33 family.

It localises to the cytoplasm. The catalysed reaction is Release of N-terminal proline from a peptide.. Functionally, specifically catalyzes the removal of N-terminal proline residues from peptides. This Mycoplasma genitalium (strain ATCC 33530 / DSM 19775 / NCTC 10195 / G37) (Mycoplasmoides genitalium) protein is Putative proline iminopeptidase (pip).